The chain runs to 1029 residues: Beta-galactosidase 2 (1029 aa).

Residues Asn-104 and Asp-203 each contribute to the substrate site. Asp-203 is a Na(+) binding site. Mg(2+)-binding residues include Glu-418, His-420, and Glu-463. Residues Glu-463 and 539–542 (EYAH) each bind substrate. Glu-463 (proton donor) is an active-site residue. The active-site Nucleophile is Glu-539. Mg(2+) is bound at residue Asn-599. Na(+) contacts are provided by Phe-603 and Asn-606. Residues Asn-606 and Trp-1004 each coordinate substrate.

This sequence belongs to the glycosyl hydrolase 2 family. Homotetramer. The cofactor is Mg(2+). It depends on Na(+) as a cofactor.

It carries out the reaction Hydrolysis of terminal non-reducing beta-D-galactose residues in beta-D-galactosides.. The chain is Beta-galactosidase 2 from Enterobacter cloacae.